Consider the following 195-residue polypeptide: Small ribosomal subunit protein uS4 (195 aa).

The S4 RNA-binding domain occupies 92–152 (SRLDNIVYRL…EKHKHKANKN (61 aa)).

This sequence belongs to the universal ribosomal protein uS4 family. Part of the 30S ribosomal subunit. Contacts protein S5. The interaction surface between S4 and S5 is involved in control of translational fidelity.

Its function is as follows. One of the primary rRNA binding proteins, it binds directly to 16S rRNA where it nucleates assembly of the body of the 30S subunit. Functionally, with S5 and S12 plays an important role in translational accuracy. The polypeptide is Small ribosomal subunit protein uS4 (Karelsulcia muelleri (strain GWSS) (Sulcia muelleri)).